A 106-amino-acid chain; its full sequence is Iron-sulfur cluster assembly protein CyaY (106 aa).

This sequence belongs to the frataxin family.

In terms of biological role, involved in iron-sulfur (Fe-S) cluster assembly. May act as a regulator of Fe-S biogenesis. In Escherichia coli O127:H6 (strain E2348/69 / EPEC), this protein is Iron-sulfur cluster assembly protein CyaY.